We begin with the raw amino-acid sequence, 25 residues long: uncharacterized protein (25 aa).

This is an uncharacterized protein from Escherichia coli (Bacteriophage T3).